Reading from the N-terminus, the 458-residue chain is Acyl-CoA-binding domain-containing protein 5 (458 aa).

Residues 8-97 (HQTRFEAAVS…MKKILETMPV (90 aa)) enclose the ACB domain. Residues 19 to 28 (IQSLPKNGSF), 39 to 43 (YSFYK), K65, and Y84 contribute to the an acyl-CoA site. Disordered stretches follow at residues 119 to 248 (KHGR…REED) and 296 to 369 (TETS…GPNG). Over residues 125–139 (GVTSELGSVLTSTPN) the composition is skewed to polar residues. Positions 154–188 (AESDEEQAATKEVREEDEEEESEHSEQEDKDVEQQ) form a coiled coil. Basic and acidic residues-rich tracts occupy residues 177-195 (HSEQEDKDVEQQPGHEKPA), 303-313 (ELKDGGEDGKQ), and 322-338 (TWSEKSEHFGSRRERPS). Over residues 343–356 (GGDGSRSGQIGSGG) the composition is skewed to gly residues. Positions 373 to 402 (EQIAVVLMRLQEDMQNVLQRLHSLEVQTAS) form a coiled coil. The helical transmembrane segment at 430–450 (GTLALAVVWPFVVHWLMHVFL) threads the bilayer.

It belongs to the ATG37 family.

The protein localises to the peroxisome membrane. In terms of biological role, acyl-CoA binding protein which acts as the peroxisome receptor for pexophagy but is dispensable for aggrephagy and nonselective autophagy. Binds medium- and long-chain acyl-CoA esters. The polypeptide is Acyl-CoA-binding domain-containing protein 5 (acbd5) (Xenopus tropicalis (Western clawed frog)).